The chain runs to 71 residues: Small ribosomal subunit protein bS21B (71 aa).

The protein belongs to the bacterial ribosomal protein bS21 family.

This Rhizobium johnstonii (strain DSM 114642 / LMG 32736 / 3841) (Rhizobium leguminosarum bv. viciae) protein is Small ribosomal subunit protein bS21B.